The primary structure comprises 58 residues: Large ribosomal subunit protein uL30 (58 aa).

The protein belongs to the universal ribosomal protein uL30 family. As to quaternary structure, part of the 50S ribosomal subunit.

This is Large ribosomal subunit protein uL30 from Vibrio vulnificus (strain CMCP6).